The sequence spans 453 residues: MQAIAKNDIKTGTVVDLTHEGHGVVKIDRFPIFIPQALINEQIEYKIIKVKKNFAIGKLLNINTRSENRVAPPCIYYERCGGCQLQHLSYEAQLEMKKEQVINLFQRKAHFDNSKINDTVGMTDPWRYRNKSQIPVGKNEQNEVIMGFYRQRSHDIIDMESCLIQDSQHQEVMNEVKSILKDLNVSIYQEQLKKGLMRHLVVRTGYHTDEMMIIFVTNGKKWPQKNAVVEKILDAFPNVTSIKQNINDSHSNVIMGRQSITLYGKDTIIDQLTDSTFKISDQSFYQINSEQTEKLYNKAIEYAQLTGNEVVLDTYCGIGTIGLYMAPHAKHVYGVEVVPSAIEDAQQNATINQCNNTTFVCGKAEEVILQWKAQGIKPDVVMVDPPRKGCDETFIQTLLTLEPKRIVYISCNPATQQRDALLLAEKYQLEEVTPVDMFPQTTHVETVALFNLK.

Residues Cys74, Cys80, Cys83, and Cys162 each coordinate [4Fe-4S] cluster. Gln286, Tyr315, Glu336, and Asp384 together coordinate S-adenosyl-L-methionine. The Nucleophile role is filled by Cys411.

The protein belongs to the class I-like SAM-binding methyltransferase superfamily. RNA M5U methyltransferase family.

This is an uncharacterized protein from Staphylococcus aureus (strain MW2).